We begin with the raw amino-acid sequence, 280 residues long: uncharacterized protein (280 aa).

A run of 7 helical transmembrane segments spans residues 6–26, 38–58, 79–99, 105–125, 144–164, 171–191, and 231–251; these read YLVI…TPLV, VLAI…YLFP, IFLL…VFLK, GVLA…ELIF, NQIY…IILW, ISFF…ALMV, and LVFI…TLFA.

Its subcellular location is the cell membrane. This is an uncharacterized protein from Mycoplasma genitalium (strain ATCC 33530 / DSM 19775 / NCTC 10195 / G37) (Mycoplasmoides genitalium).